The chain runs to 947 residues: Bromodomain testis-specific protein (947 aa).

The region spanning 27-133 (RLTNQLQYLQ…KLFVQKLSQM (107 aa)) is the Bromo 1 domain. At S187 the chain carries Phosphoserine. Residues 209–220 (KGVKRKADTTTP) carry the Nuclear localization signal motif. In terms of domain architecture, Bromo 2 spans 267 to 376 (VKVTEQLRHC…DVFETHFSKI (110 aa)). Disordered regions lie at residues 395–421 (ETTG…ERVQ), 444–512 (PFRK…PMNY), 610–690 (NNQL…VKKM), and 849–873 (HLEQ…GLTV). The span at 403-413 (NEASSEGNSSG) shows a compositional bias: low complexity. Residues 417–470 (DERVQRLAKLQEQLKAVHQQLQVLSQVPFRKLNKKKEKSKKEKKKEKVNNSNEN) are a coiled coil. Residues 447–462 (KLNKKKEKSKKEKKKE) are compositionally biased toward basic residues. The span at 470-481 (NPRKMCEQMRLK) shows a compositional bias: basic and acidic residues. A compositionally biased stretch (basic residues) spans 482–494 (EKSKRNQPKKRKQ). Residues 500 to 582 (KSEDEDNAKP…ACLRKRPLKP (83 aa)) form the NET domain. Low complexity predominate over residues 631-668 (VGSVSRLSESSSSSSSSSESESSSSDLSSSDSSGSESE). 2 stretches are compositionally biased toward basic and acidic residues: residues 674-690 (TEVK…VKKM) and 849-865 (HLEQ…ENQR).

The protein belongs to the BET family. In terms of assembly, interacts with SMARCE1. Interacts with mRNA splicing machinery proteins SRSF2, DDX5, HNRNPK and TARDBP. Interacts with the acetylated N-terminus of histone H1, H2, H3 and H4. Interacts with P-TEFb components CDK9 and CCNT1/cyclin-T1. Post-translationally, ubiquitinated in a SPOP-dependent manner, leading to proteasomal degradation.

The protein localises to the nucleus. In terms of biological role, testis-specific chromatin protein that specifically binds histone H4 acetylated at 'Lys-5' and 'Lys-8' (H4K5ac and H4K8ac, respectively) and plays a key role in spermatogenesis. Required in late pachytene spermatocytes: plays a role in meiotic and post-meiotic cells by binding to acetylated histones at the promoter of specific meiotic and post-meiotic genes, facilitating their activation at the appropriate time. In the post-meiotic phase of spermatogenesis, binds to hyperacetylated histones and participates in their general removal from DNA. Also recognizes and binds a subset of butyrylated histones: able to bind histone H4 butyrylated at 'Lys-8' (H4K8ac), while it is not able to bind H4 butyrylated at 'Lys-5' (H4K5ac). Also acts as a component of the splicing machinery in pachytene spermatocytes and round spermatids and participates in 3'-UTR truncation of specific mRNAs in post-meiotic spermatids. Required for chromocenter organization, a structure comprised of peri-centromeric heterochromatin. The protein is Bromodomain testis-specific protein (BRDT) of Macaca fascicularis (Crab-eating macaque).